Consider the following 466-residue polypeptide: tRNA modification GTPase MnmE (466 aa).

Residues arginine 25, glutamate 82, and lysine 127 each contribute to the (6S)-5-formyl-5,6,7,8-tetrahydrofolate site. Positions 223-388 (GIKVVIAGQP…LRRQLLQIAG (166 aa)) constitute a TrmE-type G domain. A K(+)-binding site is contributed by asparagine 233. GTP-binding positions include 233-238 (NAGKSS), 252-258 (TPIAGTT), 277-280 (DTAG), 346-349 (NKAD), and 369-371 (SAR). Serine 237 contacts Mg(2+). Threonine 252, isoleucine 254, and threonine 257 together coordinate K(+). Threonine 258 contributes to the Mg(2+) binding site. Residue lysine 466 participates in (6S)-5-formyl-5,6,7,8-tetrahydrofolate binding.

It belongs to the TRAFAC class TrmE-Era-EngA-EngB-Septin-like GTPase superfamily. TrmE GTPase family. In terms of assembly, homodimer. Heterotetramer of two MnmE and two MnmG subunits. The cofactor is K(+).

Its subcellular location is the cytoplasm. Its function is as follows. Exhibits a very high intrinsic GTPase hydrolysis rate. Involved in the addition of a carboxymethylaminomethyl (cmnm) group at the wobble position (U34) of certain tRNAs, forming tRNA-cmnm(5)s(2)U34. The protein is tRNA modification GTPase MnmE of Acidovorax sp. (strain JS42).